The sequence spans 39 residues: U2-ctenitoxin-Co1a (39 aa).

In terms of processing, disulfide bonds are present. As to expression, expressed by the venom gland.

Its subcellular location is the secreted. Functionally, omega-agatoxins are antagonists of voltage-gated calcium channels (Cav). The protein is U2-ctenitoxin-Co1a of Ctenus ornatus (Brazilian spider).